A 237-amino-acid polypeptide reads, in one-letter code: Demethylmenaquinone methyltransferase (237 aa).

S-adenosyl-L-methionine-binding positions include threonine 58, aspartate 79, and 106–107; that span reads NA.

Belongs to the class I-like SAM-binding methyltransferase superfamily. MenG/UbiE family.

The enzyme catalyses a 2-demethylmenaquinol + S-adenosyl-L-methionine = a menaquinol + S-adenosyl-L-homocysteine + H(+). Its pathway is quinol/quinone metabolism; menaquinone biosynthesis; menaquinol from 1,4-dihydroxy-2-naphthoate: step 2/2. Methyltransferase required for the conversion of demethylmenaquinol (DMKH2) to menaquinol (MKH2). This chain is Demethylmenaquinone methyltransferase, found in Listeria innocua serovar 6a (strain ATCC BAA-680 / CLIP 11262).